The primary structure comprises 109 residues: Large ribosomal subunit protein uL23 (109 aa).

Belongs to the universal ribosomal protein uL23 family. In terms of assembly, part of the 50S ribosomal subunit. Contacts protein L29, and trigger factor when it is bound to the ribosome.

In terms of biological role, one of the early assembly proteins it binds 23S rRNA. One of the proteins that surrounds the polypeptide exit tunnel on the outside of the ribosome. Forms the main docking site for trigger factor binding to the ribosome. The polypeptide is Large ribosomal subunit protein uL23 (Prosthecochloris aestuarii (strain DSM 271 / SK 413)).